We begin with the raw amino-acid sequence, 204 residues long: Casparian strip membrane protein 2 (204 aa).

The Cytoplasmic segment spans residues 1–41 (MKNESTFIDVPADSSSAMKGKAPLIGVAKDHTASGSGGYNR). Residues 42 to 62 (GLSIFDFLLRLAAIVAASVAA) traverse the membrane as a helical segment. At 63-92 (GTMFTSDETLPFFTQFLQFEAGYDDLPTFQ) the chain is on the extracellular side. Residues 93–113 (FFVIAMSLVSGYIVLSLPISV) form a helical membrane-spanning segment. Residues 114–125 (VTIVRPLAAAPR) lie on the Cytoplasmic side of the membrane. The helical transmembrane segment at 126–146 (LLLLVLDTAVMGLTMAAASSA) threads the bilayer. Residues 147-178 (AAISYVAHNGNQNTNWLPICQQFFDFCQKTSG) lie on the Extracellular side of the membrane. Residues 179 to 199 (AVVSSFVAVVFFMILVVLSGV) form a helical membrane-spanning segment. Residues 200-204 (ALERH) lie on the Cytoplasmic side of the membrane.

The protein belongs to the Casparian strip membrane proteins (CASP) family. Homodimer and heterodimers.

The protein resides in the cell membrane. Its function is as follows. Regulates membrane-cell wall junctions and localized cell wall deposition. Required for establishment of the Casparian strip membrane domain (CSD) and the subsequent formation of Casparian strips, a cell wall modification of the root endodermis that determines an apoplastic barrier between the intraorganismal apoplasm and the extraorganismal apoplasm and prevents lateral diffusion. The chain is Casparian strip membrane protein 2 from Raphanus sativus (Radish).